A 45-amino-acid chain; its full sequence is Phospholipase A2 3 (45 aa).

Residues Y20, G24, and G25 each coordinate Ca(2+). Residues C21 and C36 are joined by a disulfide bond. H39 is an active-site residue. Position 40 (D40) interacts with Ca(2+).

Requires Ca(2+) as cofactor. In terms of tissue distribution, expressed by the venom gland.

The protein resides in the secreted. The enzyme catalyses a 1,2-diacyl-sn-glycero-3-phosphocholine + H2O = a 1-acyl-sn-glycero-3-phosphocholine + a fatty acid + H(+). Functionally, PLA2 catalyzes the calcium-dependent hydrolysis of the 2-acyl groups in 3-sn-phosphoglycerides. The chain is Phospholipase A2 3 from Bothrops diporus (Chaco lancehead).